We begin with the raw amino-acid sequence, 413 residues long: Alpha-1-antitrypsin 1-4 (413 aa).

Positions 1-24 are cleaved as a signal peptide; it reads MTPSISWSLLLLAGLCCLVPSFLA. N64, N101, and N265 each carry an N-linked (GlcNAc...) asparagine glycan. The segment at 368–387 is RCL; that stretch reads AATVLQVATYSMPPIVRFDH.

It belongs to the serpin family.

The protein localises to the secreted. Inhibitor of serine proteases. Can inhibit trypsin and chymotrypsin; relatively ineffective against elastase. The chain is Alpha-1-antitrypsin 1-4 (Serpina1d) from Mus musculus (Mouse).